The sequence spans 202 residues: Small ribosomal subunit protein uS4 (202 aa).

Residues 1–13 (MSRYRGPRLRITR) show a composition bias toward basic residues. The tract at residues 1–43 (MSRYRGPRLRITRRLGDLPGLTRKAAKRSHPPGQHGQARRKRS) is disordered. In terms of domain architecture, S4 RNA-binding spans 90 to 152 (NRLDNVCFRL…KASKQLAQAN (63 aa)).

It belongs to the universal ribosomal protein uS4 family. Part of the 30S ribosomal subunit. Contacts protein S5. The interaction surface between S4 and S5 is involved in control of translational fidelity.

In terms of biological role, one of the primary rRNA binding proteins, it binds directly to 16S rRNA where it nucleates assembly of the body of the 30S subunit. Functionally, with S5 and S12 plays an important role in translational accuracy. The sequence is that of Small ribosomal subunit protein uS4 from Prochlorococcus marinus (strain NATL2A).